The primary structure comprises 1199 residues: Chromosome partition protein Smc (1199 aa).

An ATP-binding site is contributed by 32 to 39 (PNGSGKSN). Positions 192–528 (GVAEFDEKSE…NARIKTLKDM (337 aa)) form a coiled coil. One can recognise an SMC hinge domain in the interval 546 to 658 (PGVVDIAGNL…VDNLENAKKL (113 aa)). Residues 691–1051 (IKVDIDMKKL…YLQLISEVQK (361 aa)) adopt a coiled-coil conformation.

The protein belongs to the SMC family. In terms of assembly, homodimer.

It is found in the cytoplasm. Functionally, required for chromosome condensation and partitioning. This is Chromosome partition protein Smc from Methanococcus voltae.